A 209-amino-acid polypeptide reads, in one-letter code: Proteasome subunit beta (209 aa).

Positions 1 to 10 (MVEQSDTMKG) are cleaved as a propeptide — removed in mature form; by autocatalysis. T11 serves as the catalytic Nucleophile.

This sequence belongs to the peptidase T1B family. The 20S proteasome core is composed of 14 alpha and 14 beta subunits that assemble into four stacked heptameric rings, resulting in a barrel-shaped structure. The two inner rings, each composed of seven catalytic beta subunits, are sandwiched by two outer rings, each composed of seven alpha subunits. The catalytic chamber with the active sites is on the inside of the barrel. Has a gated structure, the ends of the cylinder being occluded by the N-termini of the alpha-subunits. Is capped at one or both ends by the proteasome regulatory ATPase, PAN.

It localises to the cytoplasm. It catalyses the reaction Cleavage of peptide bonds with very broad specificity.. The formation of the proteasomal ATPase PAN-20S proteasome complex, via the docking of the C-termini of PAN into the intersubunit pockets in the alpha-rings, triggers opening of the gate for substrate entry. Interconversion between the open-gate and close-gate conformations leads to a dynamic regulation of the 20S proteasome proteolysis activity. Its function is as follows. Component of the proteasome core, a large protease complex with broad specificity involved in protein degradation. This Methanospirillum hungatei JF-1 (strain ATCC 27890 / DSM 864 / NBRC 100397 / JF-1) protein is Proteasome subunit beta.